Here is a 92-residue protein sequence, read N- to C-terminus: MANTPSAKKRAKQAEKRRSHNASLRSMVRTYIKNVVKAIDTKDAEKAQAAYVLAVPVIDRMADKGIIHKNKAARHKSRLNGHIKALSVPAAA.

The interval 1 to 23 is disordered; that stretch reads MANTPSAKKRAKQAEKRRSHNAS. Residues 7–20 are compositionally biased toward basic residues; that stretch reads AKKRAKQAEKRRSH.

Belongs to the bacterial ribosomal protein bS20 family.

Functionally, binds directly to 16S ribosomal RNA. This Pseudomonas fluorescens (strain SBW25) protein is Small ribosomal subunit protein bS20.